Here is a 123-residue protein sequence, read N- to C-terminus: Large ribosomal subunit protein eL8 (123 aa).

The protein belongs to the eukaryotic ribosomal protein eL8 family. In terms of assembly, part of the 50S ribosomal subunit. Probably part of the RNase P complex.

It localises to the cytoplasm. In terms of biological role, multifunctional RNA-binding protein that recognizes the K-turn motif in ribosomal RNA, the RNA component of RNase P, box H/ACA, box C/D and box C'/D' sRNAs. This chain is Large ribosomal subunit protein eL8, found in Thermococcus gammatolerans (strain DSM 15229 / JCM 11827 / EJ3).